A 311-amino-acid polypeptide reads, in one-letter code: tRNA-cytidine(32) 2-sulfurtransferase (311 aa).

Residues 45 to 50 carry the PP-loop motif motif; the sequence is SGGKDS. 3 residues coordinate [4Fe-4S] cluster: Cys120, Cys123, and Cys211.

It belongs to the TtcA family. In terms of assembly, homodimer. Mg(2+) is required as a cofactor. It depends on [4Fe-4S] cluster as a cofactor.

It localises to the cytoplasm. It carries out the reaction cytidine(32) in tRNA + S-sulfanyl-L-cysteinyl-[cysteine desulfurase] + AH2 + ATP = 2-thiocytidine(32) in tRNA + L-cysteinyl-[cysteine desulfurase] + A + AMP + diphosphate + H(+). It participates in tRNA modification. In terms of biological role, catalyzes the ATP-dependent 2-thiolation of cytidine in position 32 of tRNA, to form 2-thiocytidine (s(2)C32). The sulfur atoms are provided by the cysteine/cysteine desulfurase (IscS) system. This is tRNA-cytidine(32) 2-sulfurtransferase from Shewanella halifaxensis (strain HAW-EB4).